The following is a 562-amino-acid chain: Protein wntless (562 aa).

Over 1 to 13 (MSGTILENLSGRK) the chain is Cytoplasmic. Residues 14–34 (LSILVGSLLLCQVLCFLLGGL) form a helical membrane-spanning segment. Residues 35–239 (YAPVPAGHTN…AIHQNGGFTH (205 aa)) are Lumenal-facing. A glycan (N-linked (GlcNAc...) asparagine) is linked at Asn58. The helical transmembrane segment at 240-260 (VWLMLKTLLFPFVVGIMVWFW) threads the bilayer. The Cytoplasmic portion of the chain corresponds to 261–270 (RRVHLLQRSP). The helical transmembrane segment at 271–291 (ALLEYMLLYLGGALTFLNLPL) threads the bilayer. Residues 292 to 311 (EYLSLTIEMPYMLLLSDIRQ) lie on the Lumenal side of the membrane. Residues 312–332 (GIFYAMLLSFWLVFAGEHMLI) traverse the membrane as a helical segment. At 333-344 (QDSSNKSTIRSR) the chain is on the cytoplasmic side. The chain crosses the membrane as a helical span at residues 345-365 (YWKHLSAVVVGCISLFVFDIS). At 366-386 (ERGVQLRNPFYSIWTTPLGAK) the chain is on the lumenal side. A helical membrane pass occupies residues 387 to 407 (VAMSFILLAGVSAAVYFLFLC). Topologically, residues 408–441 (YMISKVFKNIGDKRTSLPSMSQARRLHYEGLIYR) are cytoplasmic. The chain crosses the membrane as a helical span at residues 442-462 (FKFLMLATLLCAALTVTGFIM). Topologically, residues 463–482 (GQMAEGQWKWNDDVEIQLTS) are lumenal. Residues 483–503 (AFLTGVYGMWNIYIFALLILY) form a helical membrane-spanning segment. The Cytoplasmic segment spans residues 504 to 562 (APSHKQWPTMHHSDETTQSNENIVASAASEEIEFSNLPSDSNPSEISSLTSFTRKVAFE). A disordered region spans residues 538–562 (SNLPSDSNPSEISSLTSFTRKVAFE). Polar residues predominate over residues 539 to 556 (NLPSDSNPSEISSLTSFT).

Belongs to the wntless family. As to quaternary structure, interacts with wg; in the Golgi. Interacts with Vps35, a component of the retromer complex; wls stability is regulated by Vps35.

It localises to the presynaptic cell membrane. It is found in the postsynaptic cell membrane. The protein resides in the cell membrane. The protein localises to the endoplasmic reticulum membrane. Its subcellular location is the endosome membrane. It localises to the golgi apparatus membrane. Functionally, a segment polarity gene required for wingless (wg)-dependent patterning processes, acting in both wg-sending cells and wg-target cells. In non-neuronal cells wls directs wg secretion. The wls traffic loop encompasses the Golgi, the cell surface, an endocytic compartment and a retrograde route leading back to the Golgi, and involves clathrin-mediated endocytosis and the retromer complex (a conserved protein complex consisting of Vps35 and Vps26). In neuronal cells (the larval motorneuron NMJ), the wg signal moves across the synapse via the release of wls-containing exosome-like vesicles. Postsynaptic wls is required for the trafficking of fz2 through the fz2-interacting protein Grip. This Drosophila pseudoobscura pseudoobscura (Fruit fly) protein is Protein wntless.